Here is a 115-residue protein sequence, read N- to C-terminus: Salivary protein gSG6 (115 aa).

The N-terminal stretch at 1 to 28 (MAIRVELLLAMVLLPLLLLESVVPHAAA) is a signal peptide.

As to expression, female saliva (at protein level). Distal-lateral lobes of female salivary gland (at protein level). Not detected in male salivary gland (at protein level).

It localises to the secreted. In terms of biological role, required for efficient probing and blood feeding. The sequence is that of Salivary protein gSG6 from Anopheles gambiae (African malaria mosquito).